The chain runs to 318 residues: MATLSQKKLMESVRLMEREWVKMHKALVRSRCGEVKEVRYRYVEMIGRGSFGVVVKIMDDRHNFFALKRVYQDRRYHNRELGILMEVDHPNIVRLVSYFHTDKTSSGAYLNIITDFVGMNLEEYIKANRGVETEEIRSVYRQILEGLRYLHEKNICHRDMKPSNILIDTNGLVKICDLGSAKVIKSGERNITYICSRFYRAPENLLDYKEYDFKIDIWSVGCVIAEFRHPGPIFKGDTSGSTLNRILEIVRVTSDDLIGLGCLKPDLKQGVGIRKYLEAFFSDPDLLEVLEKSLAFSPCKRSTASELLRKQFFQQAHE.

The region spanning 40–313 (YRYVEMIGRG…ASELLRKQFF (274 aa)) is the Protein kinase domain. Residues 46–54 (IGRGSFGVV) and Lys-68 each bind ATP. Catalysis depends on Asp-159, which acts as the Proton acceptor.

Belongs to the protein kinase superfamily. CMGC Ser/Thr protein kinase family. GSK-3 subfamily.

The protein localises to the cytoplasm. The protein resides in the nucleus. It carries out the reaction L-seryl-[protein] + ATP = O-phospho-L-seryl-[protein] + ADP + H(+). It catalyses the reaction L-threonyl-[protein] + ATP = O-phospho-L-threonyl-[protein] + ADP + H(+). May play a role in the initiation and completion of mitosis. This Encephalitozoon cuniculi (strain GB-M1) (Microsporidian parasite) protein is Probable serine/threonine-protein kinase MRK1 homolog (MRK1).